Here is a 70-residue protein sequence, read N- to C-terminus: Small ribosomal subunit protein bS21 (70 aa).

This sequence belongs to the bacterial ribosomal protein bS21 family.

In Nitrosospira multiformis (strain ATCC 25196 / NCIMB 11849 / C 71), this protein is Small ribosomal subunit protein bS21.